The following is a 149-amino-acid chain: Ribosome maturation factor RimP (149 aa).

Belongs to the RimP family.

Its subcellular location is the cytoplasm. Its function is as follows. Required for maturation of 30S ribosomal subunits. The protein is Ribosome maturation factor RimP of Clostridium acetobutylicum (strain ATCC 824 / DSM 792 / JCM 1419 / IAM 19013 / LMG 5710 / NBRC 13948 / NRRL B-527 / VKM B-1787 / 2291 / W).